The primary structure comprises 22 residues: Superoxide dismutase [Cu-Zn] (22 aa).

Belongs to the Cu-Zn superoxide dismutase family. Homodimer. It depends on Cu cation as a cofactor. The cofactor is Zn(2+).

It is found in the cytoplasm. The enzyme catalyses 2 superoxide + 2 H(+) = H2O2 + O2. Its function is as follows. Destroys radicals which are normally produced within the cells and which are toxic to biological systems. This is Superoxide dismutase [Cu-Zn] from Hordeum vulgare (Barley).